Here is a 1199-residue protein sequence, read N- to C-terminus: Metabotropic glutamate receptor 1 (1199 aa).

A signal peptide spans Met-1–Ile-18. Over Leu-19 to Glu-592 the chain is Extracellular. Cys-67 and Cys-109 are disulfide-bonded. Tyr-74 is a binding site for L-glutamate. N-linked (GlcNAc...) asparagine glycosylation occurs at Asn-98. L-glutamate-binding positions include Ser-165 and Ser-186–Thr-188. N-linked (GlcNAc...) asparagine glycosylation is present at Asn-223. Tyr-236 contacts L-glutamate. A disulfide bridge connects residues Cys-289 and Cys-291. Asp-318 lines the L-glutamate pocket. Cysteines 378 and 394 form a disulfide. A glycan (N-linked (GlcNAc...) asparagine) is linked at Asn-397. Lys-409 provides a ligand contact to L-glutamate. Cys-432 and Cys-439 are disulfide-bonded. An N-linked (GlcNAc...) asparagine glycan is attached at Asn-515. Residues Ser-593 to Val-615 traverse the membrane as a helical segment. The Cytoplasmic portion of the chain corresponds to Leu-616–Glu-629. The chain crosses the membrane as a helical span at residues Leu-630–Ala-650. The Extracellular portion of the chain corresponds to Lys-651 to Tyr-658. Cys-657 and Cys-746 are disulfide-bonded. A helical membrane pass occupies residues Leu-659 to Asn-680. At Arg-681 to Ala-703 the chain is on the cytoplasmic side. Residues Trp-704–Met-727 traverse the membrane as a helical segment. The Extracellular portion of the chain corresponds to Glu-728–Asn-750. Residues Leu-751–Phe-772 form a helical membrane-spanning segment. Topologically, residues Lys-773–Lys-785 are cytoplasmic. Residues Tyr-786–Gly-807 form a helical membrane-spanning segment. Topologically, residues Ser-808–Thr-815 are extracellular. A helical membrane pass occupies residues Cys-816–Ala-840. Over Lys-841 to Leu-1199 the chain is Cytoplasmic. Phosphoserine is present on Ser-853. At Thr-871 the chain carries Phosphothreonine. Disordered regions lie at residues Gly-882–Lys-905, Glu-959–Ser-1036, and His-1056–His-1081. Positions Asn-885–Trp-895 are enriched in polar residues. Ser-894 and Ser-969 each carry phosphoserine. Pro residues predominate over residues Gly-1012 to Gln-1033. Ser-1098 carries the phosphoserine modification. The disordered stretch occupies residues Glu-1120–Cys-1177. Over residues Thr-1125–Leu-1136 the composition is skewed to acidic residues. Ser-1147 carries the post-translational modification Phosphoserine. At Thr-1151 the chain carries Phosphothreonine. Ser-1154 carries the post-translational modification Phosphoserine. Residues Ser-1159–Val-1175 are compositionally biased toward low complexity.

It belongs to the G-protein coupled receptor 3 family. Homodimer; disulfide-linked. The PPXXF motif binds HOMER1, HOMER2 and HOMER3. Interacts with TAMALIN. Interacts with RYR1, RYR2, ITPR1, SHANK1 and SHANK3. Interacts with SIAH1. Predominantly expressed in cerebellar Purkinje cells, CA2-CA3 pyramidal cells of the hippocampus, and mitral and tufted cells of the olfactory bulb.

It is found in the cell membrane. The protein resides in the postsynaptic cell membrane. Its subcellular location is the cell projection. It localises to the dendrite. Its function is as follows. G-protein coupled receptor for glutamate. Ligand binding causes a conformation change that triggers signaling via guanine nucleotide-binding proteins (G proteins) and modulates the activity of down-stream effectors. Signaling activates a phosphatidylinositol-calcium second messenger system. May participate in the central action of glutamate in the CNS, such as long-term potentiation in the hippocampus and long-term depression in the cerebellum. May function in the light response in the retina. Induces GRID1 and GRID2 cation-channel activation via GNAQ-PLC-PKC pathway in dopaminergic neurons and cerebellar Purkinje cell, respectively. This Rattus norvegicus (Rat) protein is Metabotropic glutamate receptor 1 (Grm1).